A 212-amino-acid polypeptide reads, in one-letter code: NADH-quinone oxidoreductase subunit I (212 aa).

2 4Fe-4S ferredoxin-type domains span residues 76 to 105 (RLLESENERCIGCGLCEKICTSNCIRIITD) and 115 to 144 (LNYSINFGRCIYCGLCAEVCPELAIVHGDL). Cysteine 85, cysteine 88, cysteine 91, cysteine 95, cysteine 124, cysteine 127, cysteine 130, and cysteine 134 together coordinate [4Fe-4S] cluster.

Belongs to the complex I 23 kDa subunit family. In terms of assembly, NDH-1 is composed of 14 different subunits. Subunits NuoA, H, J, K, L, M, N constitute the membrane sector of the complex. The cofactor is [4Fe-4S] cluster.

It localises to the cell inner membrane. It carries out the reaction a quinone + NADH + 5 H(+)(in) = a quinol + NAD(+) + 4 H(+)(out). NDH-1 shuttles electrons from NADH, via FMN and iron-sulfur (Fe-S) centers, to quinones in the respiratory chain. The immediate electron acceptor for the enzyme in this species is believed to be ubiquinone. Couples the redox reaction to proton translocation (for every two electrons transferred, four hydrogen ions are translocated across the cytoplasmic membrane), and thus conserves the redox energy in a proton gradient. The sequence is that of NADH-quinone oxidoreductase subunit I from Helicobacter hepaticus (strain ATCC 51449 / 3B1).